The chain runs to 456 residues: 1,3-beta-glucanosyltransferase gas4 (456 aa).

The signal sequence occupies residues Met-1–Thr-25. Cys-68 and Cys-97 are disulfide-bonded. Positions 86, 156, 157, 197, and 202 each coordinate (1,3-beta-D-glucosyl)n. Glu-157 acts as the Proton donor in catalysis. 2 cysteine pairs are disulfide-bonded: Cys-211-Cys-350 and Cys-229-Cys-260. N-linked (GlcNAc...) asparagine glycosylation is present at Asn-248. Glu-257 (nucleophile) is an active-site residue. Tyr-296 contributes to the (1,3-beta-D-glucosyl)n binding site. Disordered stretches follow at residues Asn-334–Asn-353 and Ile-384–Ser-434. N-linked (GlcNAc...) asparagine glycans are attached at residues Asn-353 and Asn-415. Over residues Thr-417 to Ser-434 the composition is skewed to low complexity. Ser-432 carries the GPI-anchor amidated serine lipid modification. A propeptide spans Gly-433–Phe-456 (removed in mature form).

The protein belongs to the glycosyl hydrolase 72 family.

The protein localises to the cell membrane. In terms of biological role, splits internally a 1,3-beta-glucan molecule and transfers the newly generated reducing end (the donor) to the non-reducing end of another 1,3-beta-glucan molecule (the acceptor) forming a 1,3-beta linkage, resulting in the elongation of 1,3-beta-glucan chains in the cell wall. Involved in spore wall assembly. The sequence is that of 1,3-beta-glucanosyltransferase gas4 (gas4) from Schizosaccharomyces pombe (strain 972 / ATCC 24843) (Fission yeast).